Reading from the N-terminus, the 937-residue chain is Lysosomal alpha-glucosidase (937 aa).

The first 23 residues, Met-1–Leu-23, serve as a signal peptide directing secretion. A propeptide spanning residues Gly-24–Arg-60 is cleaved from the precursor. The P-type domain occupies Thr-68–Pro-118. 3 disulfides stabilise this stretch: Cys-70-Cys-97, Cys-80-Cys-96, and Cys-91-Cys-114. Residues Asn-127, Asn-220, Asn-259, and Asn-377 are each glycosylated (N-linked (GlcNAc...) asparagine). Asp-391 contributes to the substrate binding site. A glycan (N-linked (GlcNAc...) asparagine) is linked at Asn-457. The active-site Nucleophile is the Asp-505. The active site involves Glu-508. A disulfide bridge connects residues Cys-520 and Cys-545. Substrate contacts are provided by Arg-587 and Asp-603. Cys-634 and Cys-645 form a disulfide bridge. A glycan (N-linked (GlcNAc...) asparagine) is linked at Asn-639. His-661 is a substrate binding site. Residues Asn-867, Asn-888, and Asn-910 are each glycosylated (N-linked (GlcNAc...) asparagine).

It belongs to the glycosyl hydrolase 31 family.

It localises to the lysosome. The protein resides in the lysosome membrane. It catalyses the reaction Hydrolysis of terminal, non-reducing (1-&gt;4)-linked alpha-D-glucose residues with release of alpha-D-glucose.. Functionally, essential for the degradation of glycogen in lysosomes. Has highest activity on alpha-1,4-linked glycosidic linkages, but can also hydrolyze alpha-1,6-linked glucans. This Bos taurus (Bovine) protein is Lysosomal alpha-glucosidase (GAA).